A 323-amino-acid chain; its full sequence is Serine/threonine-protein phosphatase PP1-gamma catalytic subunit (323 aa).

Alanine 2 carries the N-acetylalanine modification. Aspartate 64, histidine 66, aspartate 92, and asparagine 124 together coordinate Mn(2+). Histidine 125 acts as the Proton donor in catalysis. 2 residues coordinate Mn(2+): histidine 173 and histidine 248. A disordered region spans residues 302 to 323 (KKPNATRPVTPPRGMITKQAKK). Residues threonine 307 and threonine 311 each carry the phosphothreonine modification.

The protein belongs to the PPP phosphatase family. PP-1 subfamily. As to quaternary structure, PP1 comprises a catalytic subunit, PPP1CA, PPP1CB or PPP1CC, which is folded into its native form by inhibitor 2 and glycogen synthetase kinase 3, and then complexed to one or several targeting or regulatory subunits. PPP1R12A, PPP1R12B and PPP1R12C mediate binding to myosin. PPP1R3A (in skeletal muscle), PPP1R3B (in sliver), PPP1R3C, PPP1R3D and PPP1R3F (in brain) mediate binding to glycogen. PPP1R15A and PPP1R15B mediate binding to EIF2S1. Part of a complex containing PPP1R15B, PP1 and NCK1/2. Interacts with PPP1R3B, PPP1R7 and CDCA2. Isoform 2 interacts with SPZ1. Interacts with IKFZ1; the interaction targets PPP1CC to pericentromeric heterochromatin, dephosphorylates IKAROS, stabilizes it and prevents it from degradation. Interacts with NOM1 and PPP1R8. Component of the PTW/PP1 phosphatase complex, composed of PPP1R10/PNUTS, TOX4, WDR82, and PPP1CA or PPP1CB or PPP1CC. Interacts with PPP1R8. Interacts with NEK2. Interacts with URI1; the interaction is phosphorylation-dependent and occurs in a growth factor-dependent manner. Interacts with FOXP3. Interacts with TMEM225 (via RVxF motif). Interacts with MKI67. Interacts with RRP1B; this targets PPP1CC to the nucleolus. Found in a complex with PPP1CA, PPP1CC, SHC1 and PEAK1. Interacts with DYNLT4. Interacts (via RVxF motif) with FIRRM; regulates PLK1 kinase activity. Interacts with the KNL1 complex subunit KNL1; the interaction is direct and mutually exclusive with KNL1 binding to microtubules. Component of the SHOC2-MRAS-PP1c (SMP) complex consisting of SHOC2, GTP-bound M-Ras/MRAS and the catalytic subunit of protein phosphatase 1 (either PPP1CA, PPP1CB or PPP1CC). SHOC2 and PP1c preferably bind M-Ras/MRAS, but they also bind K-Ras/KRAS, N-Ras/NRAS and H-Ras/HRAS; these interactions are GTP-dependent and both SHOC2 and PP1c are required to form a stable complex. Interacts with SHOC2 in the absence of Ras GTPases. Mn(2+) is required as a cofactor. Post-translationally, phosphorylated by NEK2. Isoform 2 is expressed only in testis, in the late spermatocytes and early spematids (at protein level).

Its subcellular location is the cytoplasm. It localises to the nucleus. It is found in the cleavage furrow. The protein localises to the nucleolus. The protein resides in the nucleoplasm. Its subcellular location is the chromosome. It localises to the centromere. It is found in the kinetochore. The protein localises to the nucleus speckle. The protein resides in the midbody. Its subcellular location is the mitochondrion. It localises to the cytoskeleton. It is found in the microtubule organizing center. It catalyses the reaction O-phospho-L-seryl-[protein] + H2O = L-seryl-[protein] + phosphate. The enzyme catalyses O-phospho-L-threonyl-[protein] + H2O = L-threonyl-[protein] + phosphate. With respect to regulation, inactivated by binding to URI1. In terms of biological role, protein phosphatase that associates with over 200 regulatory proteins to form highly specific holoenzymes which dephosphorylate hundreds of biological targets. Protein phosphatase 1 (PP1) is essential for cell division, and participates in the regulation of glycogen metabolism, muscle contractility and protein synthesis. Dephosphorylates RPS6KB1. Involved in regulation of ionic conductances and long-term synaptic plasticity. May play an important role in dephosphorylating substrates such as the postsynaptic density-associated Ca(2+)/calmodulin dependent protein kinase II. Component of the PTW/PP1 phosphatase complex, which plays a role in the control of chromatin structure and cell cycle progression during the transition from mitosis into interphase. In balance with CSNK1D and CSNK1E, determines the circadian period length, through the regulation of the speed and rhythmicity of PER1 and PER2 phosphorylation. May dephosphorylate CSNK1D and CSNK1E. Regulates the recruitment of the SKA complex to kinetochores. Core component of the SHOC2-MRAS-PP1c (SMP) holophosphatase complex that regulates the MAPK pathway activation. Dephosphorylates MKI67 at the onset of anaphase. The SMP complex specifically dephosphorylates the inhibitory phosphorylation at 'Ser-259' of RAF1 kinase, 'Ser-365' of BRAF kinase and 'Ser-214' of ARAF kinase, stimulating their kinase activities. The SMP complex enhances the dephosphorylation activity and substrate specificity of PP1c. Required for normal male fertility. The sequence is that of Serine/threonine-protein phosphatase PP1-gamma catalytic subunit (Ppp1cc) from Rattus norvegicus (Rat).